Here is a 36-residue protein sequence, read N- to C-terminus: Kappa-theraphotoxin-Aa1a (36 aa).

Cystine bridges form between C3–C18, C10–C23, and C17–C30. An Isoleucine amide modification is found at I36.

The protein belongs to the neurotoxin 10 (Hwtx-1) family. In terms of tissue distribution, expressed by the venom gland.

It localises to the secreted. In terms of biological role, selective inhibitor of voltage-gated potassium channel Kv10.1/KCNH1/EAG1 (IC(50)=637 nM). It acts by shifting the voltage dependence of channel activation in a depolarising direction. It shows a 100% inhibition at saturating concentrations, shows fast on-rates and is reversible. It also slightly affects channel inactivation, when the membrane is highly depolarised (&gt;+80 mV). This chain is Kappa-theraphotoxin-Aa1a, found in Avicularia aurantiaca (Yellow-banded pinktoe tarantula).